The sequence spans 933 residues: Bifunctional uridylyltransferase/uridylyl-removing enzyme (933 aa).

Positions 1–390 (MLSTRAASAD…RLAALARRKD (390 aa)) are uridylyltransferase. The uridylyl-removing stretch occupies residues 391–745 (VDGFVVDGER…TRIDRGRAIT (355 aa)). One can recognise an HD domain in the interval 506 to 628 (VDEHTLFALG…VQSPERLRLL (123 aa)). 2 ACT domains span residues 746–829 (EVTI…DLTK) and 859–933 (VIEV…DPSA).

This sequence belongs to the GlnD family. It depends on Mg(2+) as a cofactor.

It catalyses the reaction [protein-PII]-L-tyrosine + UTP = [protein-PII]-uridylyl-L-tyrosine + diphosphate. It carries out the reaction [protein-PII]-uridylyl-L-tyrosine + H2O = [protein-PII]-L-tyrosine + UMP + H(+). With respect to regulation, uridylyltransferase (UTase) activity is inhibited by glutamine, while glutamine activates uridylyl-removing (UR) activity. Uridylylation process is dependent on ATP and 2-oxoglutarate, which are effector molecules that likely bind to PII proteins and control their activity. In terms of biological role, modifies, by uridylylation and deuridylylation, the PII regulatory proteins GlnB and GlnZ, in response to the nitrogen status of the cell that GlnD senses through the glutamine level. Under low glutamine levels, catalyzes the conversion of the PII proteins and UTP to PII-UMP and PPi, while under higher glutamine levels, GlnD hydrolyzes PII-UMP to PII and UMP (deuridylylation). Thus, controls uridylylation state and activity of the PII proteins, and plays an important role in the regulation of nitrogen fixation and metabolism. This Azospirillum brasilense protein is Bifunctional uridylyltransferase/uridylyl-removing enzyme.